We begin with the raw amino-acid sequence, 439 residues long: C4-dicarboxylate transport protein (439 aa).

Helical transmembrane passes span 9 to 29 (HLYF…YYMP), 45 to 65 (MIKM…IAGM), 80 to 100 (LYFE…INVI), 150 to 170 (GEIL…SAMG), 186 to 206 (AFFG…FGAM), 221 to 241 (LGML…VVLG), 291 to 311 (VVGL…SIYL), 334 to 354 (ILGV…SGFV), and 357 to 377 (AATF…ILGI).

This sequence belongs to the dicarboxylate/amino acid:cation symporter (DAACS) (TC 2.A.23) family.

The protein localises to the cell inner membrane. Responsible for the transport of dicarboxylates such as succinate, fumarate, and malate from the periplasm across the membrane. This is C4-dicarboxylate transport protein from Citrifermentans bemidjiense (strain ATCC BAA-1014 / DSM 16622 / JCM 12645 / Bem) (Geobacter bemidjiensis).